Consider the following 218-residue polypeptide: Putative NAD(P)H nitroreductase SH0546 (218 aa).

It belongs to the nitroreductase family. It depends on FMN as a cofactor.

The polypeptide is Putative NAD(P)H nitroreductase SH0546 (Staphylococcus haemolyticus (strain JCSC1435)).